A 122-amino-acid polypeptide reads, in one-letter code: Large ribosomal subunit protein uL14 (122 aa).

Belongs to the universal ribosomal protein uL14 family. As to quaternary structure, part of the 50S ribosomal subunit. Forms a cluster with proteins L3 and L19. In the 70S ribosome, L14 and L19 interact and together make contacts with the 16S rRNA in bridges B5 and B8.

Binds to 23S rRNA. Forms part of two intersubunit bridges in the 70S ribosome. In Brucella abortus (strain 2308), this protein is Large ribosomal subunit protein uL14.